The sequence spans 307 residues: MATRIPFDESYWEEYLSGQEASLPALPAVTQLSPRVTRLLAGNPGIMQLQGTNTYLVGTGPARILIDTGEGRPVWHATLAEHLRTHHLTLEYILLTHWHGDHTGGIPDLIAHDPTLQSRIYKHHPDRGQRPIRDGQRFTVTGATVRAVFTPGHAIDHMCFLIEEEKALLTGDNVLGHGFAIVQDLAEYMASLARMAALGCERGYPAHGAVIENLPAKMQLYIHHNEVRVQQVITALASVVKLPGKRVGMTVPEIGRAIYGEVPREIVENAIVPFLSQVLWKLAEDRKVGFEPGEANKRRWFGLVTQQ.

Zn(2+)-binding residues include histidine 97, histidine 99, aspartate 101, and histidine 102. Catalysis depends on aspartate 101, which acts as the Proton donor/acceptor.

This sequence belongs to the metallo-beta-lactamase superfamily. Zn(2+) is required as a cofactor.

Its pathway is secondary metabolite biosynthesis; terpenoid biosynthesis. Lactamase-like protein; part of the gene cluster that mediates the biosynthesis of viridicatumtoxin, a tetracycline-like fungal meroterpenoid with a unique, fused spirobicyclic ring system. The first step of the pathway is the production of the malonamoyl-CoA starter unit for the polyketide synthase vrtA. The aldolase vrtJ may be involved in the synthesis of the malonamate substrate for malonamoyl-CoA synthetase vrtB. The polyketide synthase vrtA then may utilize the malonamoyl-CoA starter unit, followed by sequential condensation of eight malonyl-CoA units to form the polyketide backbone. The cyclization of the last ring could be mediated by the lactamase-like protein vrtG. The proposed post-PKS tailoring steps are a hydroxylation at C5 catalyzed the cytochrome P450 monooxygenase vrtE, a hydroxylation at C12a catalyzed by VrtH and/or VrtI, and an O-methylation by the O-methyltransferase vrtF. VrtC is then proposed to catalyze the transfer of a geranyl group synthesized by vrtD to the aromatic C ring of the tetracyclic polyketide intermediate of viridicatumtoxin to yield previridicatumtoxin. Finally, the cytochrome P450 monooxygenase vrtK catalyzes the spirocyclization of the geranyl moiety of previridicatumtoxin to afford viridicatumtoxin. The sequence is that of Lactamase-like protein vrtG from Penicillium aethiopicum.